The chain runs to 983 residues: Glycine dehydrogenase (decarboxylating) (983 aa).

The residue at position 731 (Lys731) is an N6-(pyridoxal phosphate)lysine.

This sequence belongs to the GcvP family. In terms of assembly, the glycine cleavage system is composed of four proteins: P, T, L and H. Pyridoxal 5'-phosphate serves as cofactor.

The enzyme catalyses N(6)-[(R)-lipoyl]-L-lysyl-[glycine-cleavage complex H protein] + glycine + H(+) = N(6)-[(R)-S(8)-aminomethyldihydrolipoyl]-L-lysyl-[glycine-cleavage complex H protein] + CO2. The glycine cleavage system catalyzes the degradation of glycine. The P protein binds the alpha-amino group of glycine through its pyridoxal phosphate cofactor; CO(2) is released and the remaining methylamine moiety is then transferred to the lipoamide cofactor of the H protein. The sequence is that of Glycine dehydrogenase (decarboxylating) from Nostoc sp. (strain PCC 7120 / SAG 25.82 / UTEX 2576).